The primary structure comprises 156 residues: Large ribosomal subunit protein uL15 (156 aa).

The segment at 1–48 is disordered; sequence MKLHDLKPTPGSRKDRKRVGRGPGGTDKTAGRGHKGQKSRSGAGKGAF.

Belongs to the universal ribosomal protein uL15 family. Part of the 50S ribosomal subunit. Contacts proteins L4, L21 and L35.

Binds to the 23S rRNA. This is Large ribosomal subunit protein uL15 (rplO) from Deinococcus radiodurans (strain ATCC 13939 / DSM 20539 / JCM 16871 / CCUG 27074 / LMG 4051 / NBRC 15346 / NCIMB 9279 / VKM B-1422 / R1).